The sequence spans 268 residues: Phosphatidylglycerol--prolipoprotein diacylglyceryl transferase (268 aa).

Helical transmembrane passes span 23–43 (WYAL…LALA), 58–78 (FLTW…VLFY), 96–116 (GGMS…LFCW), and 119–139 (GLSP…GLFF). Arg-141 is an a 1,2-diacyl-sn-glycero-3-phospho-(1'-sn-glycerol) binding site. 3 helical membrane-spanning segments follow: residues 181–201 (SFLE…MPAV), 206–226 (GMTA…AEFF), and 238–258 (AGAT…VWLV).

This sequence belongs to the Lgt family.

It is found in the cell inner membrane. It catalyses the reaction L-cysteinyl-[prolipoprotein] + a 1,2-diacyl-sn-glycero-3-phospho-(1'-sn-glycerol) = an S-1,2-diacyl-sn-glyceryl-L-cysteinyl-[prolipoprotein] + sn-glycerol 1-phosphate + H(+). It functions in the pathway protein modification; lipoprotein biosynthesis (diacylglyceryl transfer). Functionally, catalyzes the transfer of the diacylglyceryl group from phosphatidylglycerol to the sulfhydryl group of the N-terminal cysteine of a prolipoprotein, the first step in the formation of mature lipoproteins. This Azospirillum brasilense protein is Phosphatidylglycerol--prolipoprotein diacylglyceryl transferase.